Consider the following 173-residue polypeptide: ATP synthase subunit b (173 aa).

A helical membrane pass occupies residues 19-39 (IVWSLIILVIVAVFFYKFFMP).

The protein belongs to the ATPase B chain family. In terms of assembly, F-type ATPases have 2 components, F(1) - the catalytic core - and F(0) - the membrane proton channel. F(1) has five subunits: alpha(3), beta(3), gamma(1), delta(1), epsilon(1). F(0) has three main subunits: a(1), b(2) and c(10-14). The alpha and beta chains form an alternating ring which encloses part of the gamma chain. F(1) is attached to F(0) by a central stalk formed by the gamma and epsilon chains, while a peripheral stalk is formed by the delta and b chains.

The protein resides in the cell membrane. In terms of biological role, f(1)F(0) ATP synthase produces ATP from ADP in the presence of a proton or sodium gradient. F-type ATPases consist of two structural domains, F(1) containing the extramembraneous catalytic core and F(0) containing the membrane proton channel, linked together by a central stalk and a peripheral stalk. During catalysis, ATP synthesis in the catalytic domain of F(1) is coupled via a rotary mechanism of the central stalk subunits to proton translocation. Its function is as follows. Component of the F(0) channel, it forms part of the peripheral stalk, linking F(1) to F(0). The sequence is that of ATP synthase subunit b from Bifidobacterium longum (strain NCC 2705).